Here is a 217-residue protein sequence, read N- to C-terminus: 3,4-dihydroxy-2-butanone 4-phosphate synthase (217 aa).

D-ribulose 5-phosphate contacts are provided by residues 37–38 (RE), D42, 150–154 (RRGHT), and E174. Residue E38 coordinates Mg(2+). H153 contacts Mg(2+).

The protein belongs to the DHBP synthase family. As to quaternary structure, homodimer. Requires Mg(2+) as cofactor. Mn(2+) serves as cofactor.

It carries out the reaction D-ribulose 5-phosphate = (2S)-2-hydroxy-3-oxobutyl phosphate + formate + H(+). The protein operates within cofactor biosynthesis; riboflavin biosynthesis; 2-hydroxy-3-oxobutyl phosphate from D-ribulose 5-phosphate: step 1/1. Its function is as follows. Catalyzes the conversion of D-ribulose 5-phosphate to formate and 3,4-dihydroxy-2-butanone 4-phosphate. This Shewanella sp. (strain W3-18-1) protein is 3,4-dihydroxy-2-butanone 4-phosphate synthase.